Here is an 855-residue protein sequence, read N- to C-terminus: MAPRVVIPLDQNWEFRQADKPDSKFLPVSQFPTNVHLDLQHHGLIPDPFIGKNELLVQWVGEAQWTYRTVFAAPPVPEGARAVIAFDGLDTFATVVLNGTTILESDNMFLPHRVEVTSVLKAEGNELVITFDSAYLRGCKLVEQHPNHKWGCWNGDVSRLAVRKAQYHWGWDWGPTLLTCGPWRPVHLEIYESRLSDLYAETVVDKSLKRASVKVTAVAERRADRVRFDIALDGQQVATETAELDATSGEATVSFLIDSPALWYPVRYGKQPLYDIRATLLAGDDEVDTLSKRIGLRRAELIQRPLEGQPGTSFFFEVNNIRIYCGGSDWIPADNFIPRISRRRYYDWVRLVAEGNQFMIRVWGGGIYEEQAFYDACDELGILVWQDFMFGCGNYPAWPALLESIRREATENVKRLRHHPSIVIWAGNNEDYQYQESEGLTYDYANKDAESWLKTDFPARYIYEKILADVCADLVPSTPYHPGSPWGAGLNTHDATVGDIHQWNVWHGTQEKWQNFDRLVGRFVSEFGMQAFPAVKTIDAYLPLGRDDPDRYPQSSTVDFHNKAEGHERRIALYLVENLRYAPDPLEHFVYCTQLMQGECLASAYRLWKREWRGPGREYCGGALVWQTNDCWPVTSWSIVDYYLRPKLAYFTVKREMAPVSIGITRRTHLHPRDRHTRVNVDVKTQIEVWASNLTLEDLTVDCVLKAWDVESGEETFSETVAAALLLRENRSTEIAALDVPVRQKNVGEEGRIVVAAYLVDKEGRQMARYVNWPEPLKYVHLQKPRALRAQLTADYSAVEVSAEVPVKGVALECEDDGVRFDDNLVDIVPGEVVTIGVSGAGKDTKIETRYLGMI.

N-linked (GlcNAc...) asparagine glycosylation is present at N98. The active-site Proton donor is E430. N-linked (GlcNAc...) asparagine glycans are attached at residues N693 and N730.

The protein belongs to the glycosyl hydrolase 2 family. Beta-mannosidase B subfamily. Homodimer.

The protein localises to the secreted. The catalysed reaction is Hydrolysis of terminal, non-reducing beta-D-mannose residues in beta-D-mannosides.. It functions in the pathway glycan metabolism; N-glycan degradation. In terms of biological role, exoglycosidase that cleaves the single beta-linked mannose residue from the non-reducing end of beta-mannosidic oligosaccharides of various complexity and length. Prefers mannobiose over mannotriose. Is also severely restricted by galactosyl substitutions at the +1 subsite. Has no activity against polymeric mannan. This chain is Beta-mannosidase B (man9), found in Thermothelomyces thermophilus (Myceliophthora thermophila).